Here is an 892-residue protein sequence, read N- to C-terminus: Alanine--tRNA ligase (892 aa).

Zn(2+) is bound by residues His-577, His-581, Cys-680, and His-684.

It belongs to the class-II aminoacyl-tRNA synthetase family. Zn(2+) is required as a cofactor.

The protein resides in the cytoplasm. The catalysed reaction is tRNA(Ala) + L-alanine + ATP = L-alanyl-tRNA(Ala) + AMP + diphosphate. Functionally, catalyzes the attachment of alanine to tRNA(Ala) in a two-step reaction: alanine is first activated by ATP to form Ala-AMP and then transferred to the acceptor end of tRNA(Ala). Also edits incorrectly charged Ser-tRNA(Ala) and Gly-tRNA(Ala) via its editing domain. The protein is Alanine--tRNA ligase of Arthrobacter sp. (strain FB24).